Consider the following 1027-residue polypeptide: Xyloglucanase (1027 aa).

The signal sequence occupies residues 1 to 32 (MKTFLGKKLWMASLAVALAAGSFAALPEMTSA). Catalysis depends on Asp70, which acts as the Nucleophile. BNR repeat units lie at residues 134–143 (RSTDRGDTWQ), 185–196 (WRSSDYGATWSK), 252–262 (YRSTDGGATWT), and 357–367 (FRSKDGGTTWT). Catalysis depends on Asp479, which acts as the Proton donor. BNR repeat units lie at residues 537–545 (SSDGGTNWY) and 717–727 (FRSDDGGASWV). Residues 876-1027 (PEGSIRIEMY…SGTLQWGIEP (152 aa)) form the CBM3 domain.

The protein belongs to the glycosyl hydrolase 74 family.

Its function is as follows. Hydrolyzes the glucosidic bonds of unbranched Glc residues in tamarind seed xyloglucan, producing XXXG, XLXG, XXLG and XLLG. May have a dual endo- and exo- mode of action towards xyloglucan, or may have an endo-processive mode of action. The polypeptide is Xyloglucanase (Paenibacillus sp).